The chain runs to 809 residues: Leucine--tRNA ligase (809 aa).

The 'HIGH' region motif lies at 40 to 50 (PYPSGRIHMGH). The 'KMSKS' region motif lies at 579–583 (KMSKS). Lys-582 contributes to the ATP binding site.

The protein belongs to the class-I aminoacyl-tRNA synthetase family.

Its subcellular location is the cytoplasm. It catalyses the reaction tRNA(Leu) + L-leucine + ATP = L-leucyl-tRNA(Leu) + AMP + diphosphate. The polypeptide is Leucine--tRNA ligase (Campylobacter lari (strain RM2100 / D67 / ATCC BAA-1060)).